The primary structure comprises 448 residues: uncharacterized protein (448 aa).

257-264 (GRNAQGKT) serves as a coordination point for ATP.

This is an uncharacterized protein from Methanocaldococcus jannaschii (strain ATCC 43067 / DSM 2661 / JAL-1 / JCM 10045 / NBRC 100440) (Methanococcus jannaschii).